A 126-amino-acid chain; its full sequence is Glycine cleavage system H protein (126 aa).

Residues Thr22 to Lys104 form the Lipoyl-binding domain. An N6-lipoyllysine modification is found at Lys63.

The protein belongs to the GcvH family. The glycine cleavage system is composed of four proteins: P, T, L and H. The cofactor is (R)-lipoate.

In terms of biological role, the glycine cleavage system catalyzes the degradation of glycine. The H protein shuttles the methylamine group of glycine from the P protein to the T protein. This is Glycine cleavage system H protein from Christiangramia forsetii (strain DSM 17595 / CGMCC 1.15422 / KT0803) (Gramella forsetii).